We begin with the raw amino-acid sequence, 178 residues long: Gamma-crystallin M1 (178 aa).

2 Beta/gamma crystallin 'Greek key' domains span residues 2 to 40 and 41 to 86; these read GKII…RVES and GCFM…RMIP. Positions 87 to 91 are connecting peptide; it reads PYRGS. Beta/gamma crystallin 'Greek key' domains follow at residues 92–132 and 133–175; these read YRMR…HVMD and GHWL…RRIT.

Belongs to the beta/gamma-crystallin family. As to quaternary structure, monomer.

In terms of biological role, crystallins are the dominant structural components of the vertebrate eye lens. This is Gamma-crystallin M1 from Cyprinus carpio (Common carp).